Reading from the N-terminus, the 164-residue chain is Protein-export protein SecB (164 aa).

This sequence belongs to the SecB family. As to quaternary structure, homotetramer, a dimer of dimers. One homotetramer interacts with 1 SecA dimer.

It is found in the cytoplasm. Its function is as follows. One of the proteins required for the normal export of preproteins out of the cell cytoplasm. It is a molecular chaperone that binds to a subset of precursor proteins, maintaining them in a translocation-competent state. It also specifically binds to its receptor SecA. The sequence is that of Protein-export protein SecB from Chromohalobacter salexigens (strain ATCC BAA-138 / DSM 3043 / CIP 106854 / NCIMB 13768 / 1H11).